The sequence spans 412 residues: Phytoene synthase 1, chloroplastic (412 aa).

A chloroplast-targeting transit peptide spans 1 to 129 (MSVALLWVVS…AYDRCGEVCA (129 aa)).

This sequence belongs to the phytoene/squalene synthase family. As to quaternary structure, monomer. Interacts with SGR1.

Its subcellular location is the plastid. The protein localises to the chloroplast. The enzyme catalyses 2 (2E,6E,10E)-geranylgeranyl diphosphate = 15-cis-phytoene + 2 diphosphate. It functions in the pathway carotenoid biosynthesis; phytoene biosynthesis; all-trans-phytoene from geranylgeranyl diphosphate: step 1/1. Its function is as follows. Catalyzes the reaction from prephytoene diphosphate to phytoene. In Solanum lycopersicum (Tomato), this protein is Phytoene synthase 1, chloroplastic (PSY1).